Reading from the N-terminus, the 150-residue chain is Endoribonuclease YbeY (150 aa).

Zn(2+)-binding residues include histidine 112, histidine 116, and histidine 122.

This sequence belongs to the endoribonuclease YbeY family. The cofactor is Zn(2+).

It localises to the cytoplasm. In terms of biological role, single strand-specific metallo-endoribonuclease involved in late-stage 70S ribosome quality control and in maturation of the 3' terminus of the 16S rRNA. The chain is Endoribonuclease YbeY from Geobacter sulfurreducens (strain ATCC 51573 / DSM 12127 / PCA).